The following is a 500-amino-acid chain: NF-kappa-B inhibitor epsilon (500 aa).

The segment covering 1 to 10 (MNQRRSESRP) has biased composition (basic and acidic residues). Disordered regions lie at residues 1–66 (MNQR…PAWA), 84–215 (LSSL…YGSS), and 222–241 (SLLG…LPHV). 3 positions are modified to phosphoserine: Ser157, Ser161, and Ser183. The span at 161-186 (SLRSLRSLPESTSAPASGPSDGSPQP) shows a compositional bias: low complexity. The segment covering 196–209 (EPQEKEDADGERAD) has biased composition (basic and acidic residues). ANK repeat units lie at residues 258-291 (DGDT…DIQN), 293-322 (LYQT…SRAL), 326-355 (HGDT…EPGR), 369-398 (QGLA…DIDV), 403-432 (SGKT…QVDA), and 436-465 (NGCT…DSLL).

The protein belongs to the NF-kappa-B inhibitor family. As to quaternary structure, interacts with RELA, REL, NFKB1 nuclear factor NF-kappa-B p50 subunit and NFKB2 nuclear factor NF-kappa-B p52 subunit. Interacts with HNRNPA2B1; the interaction may be mediated by the RRM2 domain of HNRNPA2B1, and HNRNPA2B1 may interact simultaneously with FAM76B and either NFKBIA or NFKBIE to form a complex. Serine phosphorylated; followed by proteasome-dependent degradation. In terms of tissue distribution, highly expressed in spleen, testis and lung, followed by kidney, pancreas, heart, placenta and brain. Also expressed in granulocytes and macrophages.

Its subcellular location is the cytoplasm. In terms of biological role, sequesters NF-kappa-B transcription factor complexes in the cytoplasm, thereby inhibiting their activity. Sequestered complexes include NFKB1-RELA (p50-p65) and NFKB1-REL (p50-c-Rel) complexes. Limits B-cell activation in response to pathogens, and also plays an important role in B-cell development. The polypeptide is NF-kappa-B inhibitor epsilon (NFKBIE) (Homo sapiens (Human)).